The following is a 448-amino-acid chain: MNVNAAPEIVGRASQGVTPGYMSGFGNSFETEALPGALPVGRNSPQRAAYGLYAEQLSGSPFTAPRGANERSWLYRIRPSVKHSGRFAKADMGLWRSAPCLEHDMPIAQLRWDAPPMPTEEVTFVQGVRTMTTAGDVNTQAGMAAHMYLISRSMVDQHFYNADGELMFVPQQGRLRLVTEFGVIAIEPAEIAVIPRGVKFRVELVDGPARGYLCENYGGAFTLPERGPIGANCLANSRDFLTPVASYEDKDTPTELFVKWGGALWRTSLPHSPIDVVAWHGNYAPYKYDLRTFSPVGAIGFDHPDPSIFTVLTSPSETAGTANIDFVIFPERWMVAENTFRPPWYHMNIMSEFMGLIYGVYDAKPQGFAPGGASLHNMMLPHGPDREAFDHASNGELKPVKLTGTMAFMLETRYPQRVTEYAATADTLQDDYADCWRGLEKRFDPSRP.

Residue H303 is the Proton acceptor of the active site. H346 and E352 together coordinate Fe cation. Positions 361 and 382 each coordinate homogentisate. Position 382 (H382) interacts with Fe cation.

Belongs to the homogentisate dioxygenase family. Hexamer; dimer of trimers. It depends on Fe cation as a cofactor.

It carries out the reaction homogentisate + O2 = 4-maleylacetoacetate + H(+). It functions in the pathway amino-acid degradation; L-phenylalanine degradation; acetoacetate and fumarate from L-phenylalanine: step 4/6. Functionally, involved in the catabolism of homogentisate (2,5-dihydroxyphenylacetate or 2,5-OH-PhAc), a central intermediate in the degradation of phenylalanine and tyrosine. Catalyzes the oxidative ring cleavage of the aromatic ring of homogentisate to yield maleylacetoacetate. The protein is Homogentisate 1,2-dioxygenase of Rhodopseudomonas palustris (strain BisB5).